The sequence spans 191 residues: Protein DMP10 (191 aa).

4 helical membrane passes run 15 to 35 (FANL…PSFS), 48 to 68 (LLTI…SFTD), 114 to 134 (LSFV…ALAV), and 158 to 178 (LMIK…FAIF).

The protein belongs to the plant DMP1 protein family. Restricted to flowers.

Its subcellular location is the membrane. Its function is as follows. Involved in membrane remodeling. The sequence is that of Protein DMP10 from Arabidopsis thaliana (Mouse-ear cress).